An 82-amino-acid chain; its full sequence is Small ribosomal subunit protein eS21 (82 aa).

It belongs to the eukaryotic ribosomal protein eS21 family.

This is Small ribosomal subunit protein eS21 (RPS21) from Cyanophora paradoxa.